Here is an 854-residue protein sequence, read N- to C-terminus: DNA topoisomerase 1 type prokaryotic (854 aa).

One can recognise a Toprim domain in the interval 2–110 (SILILLESPG…KRLRFNAITK (109 aa)). Positions 8 and 79 each coordinate Mg(2+). One can recognise a Topo IA-type catalytic domain in the interval 124–610 (DKNLVDAQKA…DFYDKLKPIV (487 aa)). The segment at 158-163 (SAGRVQ) is interaction with DNA. The active-site O-(5'-phospho-DNA)-tyrosine intermediate is tyrosine 302. Positions 802–854 (KSAPKGGSKTIRKPSQTKYSQTKSTKSTKSTKSTNKKFVGKSAKKTTKKTTKK) are disordered. Residues 814-834 (KPSQTKYSQTKSTKSTKSTKS) are compositionally biased toward low complexity. Over residues 835 to 854 (TNKKFVGKSAKKTTKKTTKK) the composition is skewed to basic residues.

This sequence belongs to the type IA topoisomerase family. It depends on Mg(2+) as a cofactor.

It is found in the virion. It carries out the reaction ATP-independent breakage of single-stranded DNA, followed by passage and rejoining.. In terms of biological role, releases the supercoiling and torsional tension of DNA, which is introduced during the DNA replication and transcription, by transiently cleaving and rejoining one strand of the DNA duplex. Introduces a single-strand break via transesterification at a target site in duplex DNA. The scissile phosphodiester is attacked by the catalytic tyrosine of the enzyme, resulting in the formation of a DNA-(5'-phosphotyrosyl)-enzyme intermediate and the expulsion of a 3'-OH DNA strand. The free DNA strand then undergoes passage around the unbroken strand, thus removing DNA supercoils. Finally, in the religation step, the DNA 3'-OH attacks the covalent intermediate to expel the active-site tyrosine and restore the DNA phosphodiester backbone. This chain is DNA topoisomerase 1 type prokaryotic (TOP1P), found in Acanthamoeba polyphaga (Amoeba).